We begin with the raw amino-acid sequence, 483 residues long: Fructose-like PTS system EIIBC component (483 aa).

The 105-residue stretch at 1 to 105 (MESSLRIVAI…IDQIFSELPT (105 aa)) folds into the PTS EIIB type-2 domain. C13 acts as the Phosphocysteine intermediate; for EIIB activity in catalysis. Position 13 is a phosphocysteine; by EIIA (C13). Positions 128–475 (VMSHLMAGVS…LWLRRKAKAA (348 aa)) constitute a PTS EIIC type-2 domain. The next 10 membrane-spanning stretches (helical) occupy residues 132-152 (LMAG…LVAL), 180-200 (IGYL…ASSI), 204-224 (PAFA…LLGT), 227-247 (GAGF…VFWF), 264-284 (LIPF…IGPV), 303-323 (MKFA…GGPI), 344-364 (AIVG…TFIA), 380-400 (IVVG…AAPL), 402-422 (MITA…AFGI), and 442-462 (VGSF…FIIV).

The protein resides in the cell inner membrane. It catalyses the reaction D-fructose(out) + N(pros)-phospho-L-histidyl-[protein] = D-fructose 1-phosphate(in) + L-histidyl-[protein]. Functionally, the phosphoenolpyruvate-dependent sugar phosphotransferase system (sugar PTS), a major carbohydrate active transport system, catalyzes the phosphorylation of incoming sugar substrates concomitantly with their translocation across the cell membrane. The enzyme II FrvAB PTS system is involved in fructose transport. The polypeptide is Fructose-like PTS system EIIBC component (Escherichia coli (strain K12)).